The sequence spans 479 residues: Altronate oxidoreductase (479 aa).

Residue 18–29 participates in NAD(+) binding; sequence IIQFGEGNFLRA.

This sequence belongs to the mannitol dehydrogenase family. UxaB subfamily.

The catalysed reaction is D-altronate + NAD(+) = keto-D-tagaturonate + NADH + H(+). Its pathway is carbohydrate metabolism; pentose and glucuronate interconversion. This chain is Altronate oxidoreductase, found in Phocaeicola vulgatus (strain ATCC 8482 / DSM 1447 / JCM 5826 / CCUG 4940 / NBRC 14291 / NCTC 11154) (Bacteroides vulgatus).